Consider the following 60-residue polypeptide: UPF0434 protein YE1549 (60 aa).

The protein belongs to the UPF0434 family.

In Yersinia enterocolitica serotype O:8 / biotype 1B (strain NCTC 13174 / 8081), this protein is UPF0434 protein YE1549.